Reading from the N-terminus, the 252-residue chain is Imidazole glycerol phosphate synthase subunit HisF (252 aa).

Active-site residues include aspartate 11 and aspartate 130.

Belongs to the HisA/HisF family. As to quaternary structure, heterodimer of HisH and HisF.

It localises to the cytoplasm. It catalyses the reaction 5-[(5-phospho-1-deoxy-D-ribulos-1-ylimino)methylamino]-1-(5-phospho-beta-D-ribosyl)imidazole-4-carboxamide + L-glutamine = D-erythro-1-(imidazol-4-yl)glycerol 3-phosphate + 5-amino-1-(5-phospho-beta-D-ribosyl)imidazole-4-carboxamide + L-glutamate + H(+). It participates in amino-acid biosynthesis; L-histidine biosynthesis; L-histidine from 5-phospho-alpha-D-ribose 1-diphosphate: step 5/9. In terms of biological role, IGPS catalyzes the conversion of PRFAR and glutamine to IGP, AICAR and glutamate. The HisF subunit catalyzes the cyclization activity that produces IGP and AICAR from PRFAR using the ammonia provided by the HisH subunit. The sequence is that of Imidazole glycerol phosphate synthase subunit HisF from Geobacillus thermodenitrificans (strain NG80-2).